Here is a 121-residue protein sequence, read N- to C-terminus: Large ribosomal subunit protein bL20 (121 aa).

The protein belongs to the bacterial ribosomal protein bL20 family.

Binds directly to 23S ribosomal RNA and is necessary for the in vitro assembly process of the 50S ribosomal subunit. It is not involved in the protein synthesizing functions of that subunit. This is Large ribosomal subunit protein bL20 from Polynucleobacter asymbioticus (strain DSM 18221 / CIP 109841 / QLW-P1DMWA-1) (Polynucleobacter necessarius subsp. asymbioticus).